The primary structure comprises 308 residues: Putative S-adenosyl-L-methionine-dependent methyltransferase Mb3816c (308 aa).

S-adenosyl-L-methionine-binding positions include D131 and 160 to 161; that span reads DL.

It belongs to the UPF0677 family.

Exhibits S-adenosyl-L-methionine-dependent methyltransferase activity. The sequence is that of Putative S-adenosyl-L-methionine-dependent methyltransferase Mb3816c from Mycobacterium bovis (strain ATCC BAA-935 / AF2122/97).